Consider the following 917-residue polypeptide: Transcription factor E2F8 (917 aa).

Residues 1 to 122 are disordered; sequence MSSTLSEGQT…TEQGEEVEKL (122 aa). Polar residues-rich tracts occupy residues 16-27 and 37-48; these read LSPSKATSTNNK and PLKNSNKASTSE. The segment covering 93-103 has biased composition (basic and acidic residues); it reads IRNREKERAVD. Acidic residues predominate over residues 105-117; sequence SESENSQETEQGE. Residues 126–195 mediate DNA binding; the sequence is RKDKSLGLLC…LAKNRYTWHG (70 aa). Disordered regions lie at residues 221-252, 353-386, 461-497, 556-615, 671-698, and 813-834; these read QIRQ…FEVD, PAFK…SRSS, EQSA…GMQI, VGAN…SVSP, LEKE…QPQK, and GSVT…PHPG. The segment covering 233–252 has biased composition (acidic residues); it reads EFDLDGEEKENEEMSSFEVD. A DNA-binding region spans residues 273–359; it reads RKDKSLRVMS…GRKPAFKWTG (87 aa). Polar residues predominate over residues 371–386; sequence ISTTSSAPKPLESRSS. 2 stretches are compositionally biased toward low complexity: residues 475-488 and 568-578; these read SSQS…TSAS and TSNNQTNQSSS. The span at 595 to 605 shows a compositional bias: polar residues; sequence EKSSVGSPSKM. Residues 815 to 830 are compositionally biased toward polar residues; sequence VTPNPHTPEQSSSLQS.

It belongs to the E2F/DP family. In terms of assembly, homodimer and heterodimer: mainly forms homodimers and, to a lesser extent, heterodimers with e2f7.

The protein localises to the nucleus. In terms of biological role, atypical E2F transcription factor that participates in various processes such as angiogenesis and polyploidization of specialized cells. Mainly acts as a transcription repressor that binds DNA independently of DP proteins and specifically recognizes the E2 recognition site 5'-TTTC[CG]CGC-3'. Directly represses transcription of classical E2F transcription factors such as e2f1. Acts as a regulator of S-phase by recognizing and binding the E2-related site 5'-TTCCCGCC-3' and mediating repression of G1/S-regulated genes. Acts as a promoter of sprouting angiogenesis, possibly by acting as a transcription activator and promoting expression of vegfa. This is Transcription factor E2F8 (e2f8) from Danio rerio (Zebrafish).